Reading from the N-terminus, the 301-residue chain is D-alanine--D-alanine ligase (301 aa).

Positions 99 to 294 (KCILKAANIR…FPELIDMIID (196 aa)) constitute an ATP-grasp domain. 126 to 181 (IEKMGYPVVVKPTHGGSSVATFIIKEEKDIKDAVIEGFKWDSEVIIEKFIKGDEIT) serves as a coordination point for ATP. Mg(2+) is bound by residues aspartate 248, glutamate 261, and asparagine 263.

Belongs to the D-alanine--D-alanine ligase family. Mg(2+) serves as cofactor. Requires Mn(2+) as cofactor.

It localises to the cytoplasm. The enzyme catalyses 2 D-alanine + ATP = D-alanyl-D-alanine + ADP + phosphate + H(+). The protein operates within cell wall biogenesis; peptidoglycan biosynthesis. Functionally, cell wall formation. The protein is D-alanine--D-alanine ligase of Clostridium botulinum (strain Alaska E43 / Type E3).